Here is a 102-residue protein sequence, read N- to C-terminus: Co-chaperonin GroES (102 aa).

This sequence belongs to the GroES chaperonin family. As to quaternary structure, heptamer of 7 subunits arranged in a ring. Interacts with the chaperonin GroEL.

Its subcellular location is the cytoplasm. Its function is as follows. Together with the chaperonin GroEL, plays an essential role in assisting protein folding. The GroEL-GroES system forms a nano-cage that allows encapsulation of the non-native substrate proteins and provides a physical environment optimized to promote and accelerate protein folding. GroES binds to the apical surface of the GroEL ring, thereby capping the opening of the GroEL channel. The sequence is that of Co-chaperonin GroES from Chlamydia muridarum (strain MoPn / Nigg).